The following is a 327-amino-acid chain: Probable cell division protein WhiA (327 aa).

Residues 275 to 308 (SLEELGRLADPPMTKDAVAGRIRRLLSMADRKAK) constitute a DNA-binding region (H-T-H motif).

This sequence belongs to the WhiA family.

Its function is as follows. Involved in cell division and chromosome segregation. This Mycobacterium avium (strain 104) protein is Probable cell division protein WhiA.